The following is a 284-amino-acid chain: Acetylglutamate kinase (284 aa).

Residues 54–55 (GG), Arg76, and Asn179 each bind substrate.

It belongs to the acetylglutamate kinase family. ArgB subfamily.

The protein localises to the cytoplasm. The enzyme catalyses N-acetyl-L-glutamate + ATP = N-acetyl-L-glutamyl 5-phosphate + ADP. The protein operates within amino-acid biosynthesis; L-arginine biosynthesis; N(2)-acetyl-L-ornithine from L-glutamate: step 2/4. Its function is as follows. Catalyzes the ATP-dependent phosphorylation of N-acetyl-L-glutamate. In Sorangium cellulosum (strain So ce56) (Polyangium cellulosum (strain So ce56)), this protein is Acetylglutamate kinase.